The primary structure comprises 188 residues: Transcription antitermination protein NusB (188 aa).

The tract at residues 154–188 is disordered; sequence RAANPGAVSGSDAPVAPWDDSEELPAEDEAEDSRP. The segment covering 172-188 has biased composition (acidic residues); the sequence is DDSEELPAEDEAEDSRP.

This sequence belongs to the NusB family.

In terms of biological role, involved in transcription antitermination. Required for transcription of ribosomal RNA (rRNA) genes. Binds specifically to the boxA antiterminator sequence of the ribosomal RNA (rrn) operons. This is Transcription antitermination protein NusB from Corynebacterium efficiens (strain DSM 44549 / YS-314 / AJ 12310 / JCM 11189 / NBRC 100395).